The sequence spans 279 residues: 3-methyl-2-oxobutanoate hydroxymethyltransferase (279 aa).

Aspartate 43 and aspartate 82 together coordinate Mg(2+). Residues 43–44 (DS), aspartate 82, and lysine 112 each bind 3-methyl-2-oxobutanoate. Glutamate 114 contributes to the Mg(2+) binding site. Residue glutamate 181 is the Proton acceptor of the active site.

This sequence belongs to the PanB family. As to quaternary structure, homodecamer; pentamer of dimers. Requires Mg(2+) as cofactor.

The protein localises to the cytoplasm. The enzyme catalyses 3-methyl-2-oxobutanoate + (6R)-5,10-methylene-5,6,7,8-tetrahydrofolate + H2O = 2-dehydropantoate + (6S)-5,6,7,8-tetrahydrofolate. The protein operates within cofactor biosynthesis; (R)-pantothenate biosynthesis; (R)-pantoate from 3-methyl-2-oxobutanoate: step 1/2. Functionally, catalyzes the reversible reaction in which hydroxymethyl group from 5,10-methylenetetrahydrofolate is transferred onto alpha-ketoisovalerate to form ketopantoate. The sequence is that of 3-methyl-2-oxobutanoate hydroxymethyltransferase from Bacillus anthracis (strain A0248).